Reading from the N-terminus, the 229-residue chain is Potassium/proton antiporter CemA (229 aa).

2 helical membrane passes run 7–27 (FTPLFYLASIVFLPWWISFSV) and 107–127 (ILHFSTNIIWFGILSGYSILG).

Belongs to the CemA family.

Its subcellular location is the plastid. It is found in the chloroplast inner membrane. It catalyses the reaction K(+)(in) + H(+)(out) = K(+)(out) + H(+)(in). Contributes to K(+)/H(+) antiport activity by supporting proton efflux to control proton extrusion and homeostasis in chloroplasts in a light-dependent manner to modulate photosynthesis. Prevents excessive induction of non-photochemical quenching (NPQ) under continuous-light conditions. Indirectly promotes efficient inorganic carbon uptake into chloroplasts. The chain is Potassium/proton antiporter CemA from Solanum tuberosum (Potato).